The following is a 196-amino-acid chain: UPF0340 protein TTHA0583 (196 aa).

It belongs to the UPF0340 family.

The chain is UPF0340 protein TTHA0583 from Thermus thermophilus (strain ATCC 27634 / DSM 579 / HB8).